A 368-amino-acid polypeptide reads, in one-letter code: N-succinylamino acid racemase (368 aa).

2-succinylbenzoate-binding positions include S135 and 161–163 (KLK). K163 serves as the catalytic Proton donor. Position 189 (D189) interacts with Mg(2+). A 2-succinylbenzoate-binding site is contributed by N191. Positions 214 and 239 each coordinate Mg(2+). K263 acts as the Proton acceptor in catalysis. I293 is a 2-succinylbenzoate binding site.

The protein belongs to the mandelate racemase/muconate lactonizing enzyme family. MenC type 2 subfamily. In terms of assembly, homooctamer. A divalent metal cation serves as cofactor.

The enzyme catalyses N-acetyl-D-methionine = N-acetyl-L-methionine. The catalysed reaction is (1R,6R)-6-hydroxy-2-succinyl-cyclohexa-2,4-diene-1-carboxylate = 2-succinylbenzoate + H2O. Inhibited by EDTA and sulfhydryl reagents such as p-chloromercuribenzoic acid. Both OSBS and NAAAR activities are inhibited competitively by salicylhydroxamate. Functionally, acts as a N-succinylamino acid racemase (NSAR) that catalyzes the racemization of N-succinyl-phenylglycine and N-succinyl-methionine. Can catalyze the racemization of a broad range of N-acylamino acids, including N-acetyl-D/L-methionine, N-propionyl-D/L-methionine, N-butyryl-D/L-methionine and N-chloroacetyl-L-valine. Also converts 2-succinyl-6-hydroxy-2,4-cyclohexadiene-1-carboxylate (SHCHC) to 2-succinylbenzoate (OSB). Catalyzes both N-succinylamino acid racemization and OSB synthesis at equivalent rates. NSAR is probably the biological function of this enzyme. This is N-succinylamino acid racemase from Amycolatopsis sp.